The chain runs to 381 residues: O-phospho-L-seryl-tRNA:Cys-tRNA synthase (381 aa).

Residues 86 to 87 (AR), N192, and 215 to 217 (SGH) each bind pyridoxal 5'-phosphate. K218 carries the N6-(pyridoxal phosphate)lysine modification.

The protein belongs to the SepCysS family. Homodimer. Interacts with SepRS. Pyridoxal 5'-phosphate serves as cofactor.

The catalysed reaction is O-phospho-L-seryl-tRNA(Cys) + hydrogen sulfide + H(+) = L-cysteinyl-tRNA(Cys) + phosphate. In terms of biological role, converts O-phospho-L-seryl-tRNA(Cys) (Sep-tRNA(Cys)) to L-cysteinyl-tRNA(Cys) (Cys-tRNA(Cys)). In Methanococcus vannielii (strain ATCC 35089 / DSM 1224 / JCM 13029 / OCM 148 / SB), this protein is O-phospho-L-seryl-tRNA:Cys-tRNA synthase.